Consider the following 407-residue polypeptide: Phenazine 1,6-dicarboxylic acid hydroxylase PhzS (407 aa).

FAD is bound by residues Gly17, Val134, and Asp313.

Requires FAD as cofactor.

It carries out the reaction phenazine-1,6-dicarboxylate + NADH + O2 + 2 H(+) = 6-hydroxyphenazine-1-carboxylate + CO2 + NAD(+) + H2O. It catalyses the reaction 6-hydroxyphenazine-1-carboxylate + NADH + O2 + 2 H(+) = 1,6-dihydroxyphenazine + CO2 + NAD(+) + H2O. The enzyme catalyses phenazine-1-carboxylate + NADH + O2 + 2 H(+) = 1-hydroxyphenazine + CO2 + NAD(+) + H2O. Functionally, involved in the biosynthesis of phenazine natural products including myxin, an N(5),N(10)-dioxide phenazine antiobiotic, which has antimicrobial activity. Catalyzes the decarboxylative hydroxylations of phenazine 1,6-dicarboxylic acid (PDC) to produce 1,6-dihydroxyphenazine (DHP). Low activity with phenazine 1-carboxylic acid (PCA) to produce 1-hydroxyphenazine. This chain is Phenazine 1,6-dicarboxylic acid hydroxylase PhzS, found in Lysobacter antibioticus.